We begin with the raw amino-acid sequence, 510 residues long: Cytochrome P450 monooxygenase macH (510 aa).

A helical transmembrane segment spans residues leucine 7–tyrosine 29. Heme is bound at residue cysteine 454.

This sequence belongs to the cytochrome P450 family. It depends on heme as a cofactor.

The protein localises to the membrane. Its pathway is secondary metabolite biosynthesis; terpenoid biosynthesis. Its function is as follows. Cytochrome P450 monooxygenase; part of the gene cluster that mediates the biosynthesis of macrophorins, isoprenoid epoxycyclohexenones containing cyclized drimane moieties. The first step of the pathway is the synthesis of 6-methylsalicylic acid (6-MSA) by the polyketide synthase macA. 6-MSA is then converted to m-cresol by the decarboxylase macB. The cytochrome P450 monooxygenase macC then catalyzes the oxidation of m-cresol to toluquinol. Epoxidation of toluquinol is then performed by the short chain dehydrogenase macD, with the help of macE, and a further prenylation by macG leads to 7-deacetoxyyanuthone A. The next step is the hydroxylation of C-22 of 7-deacetoxyyanuthone A by the cytochrome P450 monooxygenase macH to yield 22-deacetylyanuthone A. O-Mevalon transferase macI then attaches mevalon to the hydroxyl group of 22-deacetylyanuthone A to produce yanuthone E. The terpene cyclase macJ catalyzes the cyclization of 22-deacetylyanuthone A to macrophorin A. MacJ is also able to catalyze cyclization of yanuthone E and 7-deacetoxyyanuthone A to their corresponding macrophorins. The macJ products can be further modified by macH and macJ, as well as by the FAD-dependent monooxygenase macF, to produce additional macrophorins, including 4'-oxomacrophorin A, 4'-oxomacrophorin D and 4'-oxomacrophorin E. This Penicillium terrestre protein is Cytochrome P450 monooxygenase macH.